The primary structure comprises 1013 residues: Adhesion G-protein coupled receptor G2 (1013 aa).

The first 37 residues, 1–37, serve as a signal peptide directing secretion; the sequence is MLFSGGQYSPVGRPEEVLLIYKIFLVIICFHAILVTS. Residues 38–623 are Extracellular-facing; sequence LKENAGNSSL…TSLPPSQMMA (586 aa). Residues Asn-44, Asn-78, Asn-92, Asn-104, Asn-128, Asn-137, Asn-155, Asn-179, Asn-187, Asn-366, Asn-431, Asn-452, Asn-457, Asn-524, Asn-538, Asn-543, Asn-547, and Asn-593 are each glycosylated (N-linked (GlcNAc...) asparagine). The region spanning 457–615 is the GAIN-B domain; sequence NTTTFAAQDP…GILLDLSRTS (159 aa). 2 cysteine pairs are disulfide-bonded: Cys-566–Cys-597 and Cys-585–Cys-599. Residues 566–615 are GPS; it reads CVFWDLNRNGGRGGWSSDGCSVKEKRMNETICTCSHLTSFGILLDLSRTS. The interval 604-615 is stachel; it reads SFGILLDLSRTS. A helical membrane pass occupies residues 624-644; the sequence is LTFITYIGCGLSSIFLSVTLV. Residues 645–663 lie on the Cytoplasmic side of the membrane; it reads TYIAFEKIRRDYPSKILIQ. Residues 664 to 684 traverse the membrane as a helical segment; it reads LCAALLLLNLVFLLDSWIALY. At 685-688 the chain is on the extracellular side; the sequence is NARG. Residues 689–709 traverse the membrane as a helical segment; sequence FCISVAVFLHYFLLVSFTWMG. Cysteines 690 and 774 form a disulfide. The Cytoplasmic segment spans residues 710 to 733; the sequence is LEAFHMYLALVKVFNTYIRKYILK. A helical membrane pass occupies residues 734-754; it reads FCIVGWGIPAVVVSIVLTISP. The Extracellular portion of the chain corresponds to 755-785; the sequence is DNYGIGSYGKFPNGTPDDFCWINSSVVFYIT. Residue Asn-777 is glycosylated (N-linked (GlcNAc...) asparagine). A helical transmembrane segment spans residues 786-806; sequence VVGYFCVIFLLNVSMFIVVLV. The Cytoplasmic segment spans residues 807–830; the sequence is QLCRIKKKKQLGAQRKTSIQDLRS. A helical membrane pass occupies residues 831–851; it reads IAGLTFLLGITWGFAFFAWGP. Residues 852-853 are Extracellular-facing; sequence VN. N-linked (GlcNAc...) asparagine glycosylation occurs at Asn-853. Residues 854–874 form a helical membrane-spanning segment; that stretch reads LTFMYLFAIFNTLQGFFIFIF. A 3beta-hydroxyandrost-5-en-17-one-binding site is contributed by Asn-864. Residues 875-1013 lie on the Cytoplasmic side of the membrane; the sequence is YCAAKENVRK…RGSLHFIEQM (139 aa). Ser-1006 carries the phosphoserine modification.

The protein belongs to the G-protein coupled receptor 2 family. Adhesion G-protein coupled receptor (ADGR) subfamily. In terms of assembly, heterodimer of 2 chains generated by proteolytic processing; the large extracellular N-terminal fragment and the membrane-bound C-terminal fragment predominantly remain associated and non-covalently linked. Interacts with CFTR. Post-translationally, proteolytically cleaved into 2 subunits, an extracellular subunit and a seven-transmembrane subunit. Highly glycosylated. Epididymis-specific expression (at protein level). Associated with apical membranes of efferent ductule and proximal epididymal duct epithelia.

It localises to the apical cell membrane. Its activity is regulated as follows. Forms a heterodimer of 2 chains generated by proteolytic processing that remain associated through non-covalent interactions mediated by the GAIN-B domain. In the inactivated receptor, the Stachel sequence (also named stalk) is embedded in the GAIN-B domain, where it adopts a beta-strand conformation. On activation, the Stachel moves into the 7 transmembrane region and adopts a twisted hook-shaped configuration that forms contacts within the receptor, leading to coupling of a G-alpha protein, which activates signaling. The cleaved GAIN-B and N-terminal domains can then dissociate from the rest of the receptor. Deoxycorticosterone (DOC) acts as an antagonist of ADGRG2. Adhesion G-protein coupled receptor (aGPCR) for steroid hormones, such as dehydroepiandrosterone (DHEA; also named 3beta-hydroxyandrost-5-en-17-one) and androstenedione. Involved in a signal transduction pathway controlling epididymal function and male fertility. Ligand binding causes a conformation change that triggers signaling via guanine nucleotide-binding proteins (G proteins) and modulates the activity of downstream effectors, such as adenylate cyclase. ADGRG2 is coupled to G(s) G proteins and mediates activation of adenylate cyclase activity. Also able to couple with G(q) G proteins in vitro. May regulate fluid exchange within epididymis. The protein is Adhesion G-protein coupled receptor G2 of Rattus norvegicus (Rat).